Reading from the N-terminus, the 376-residue chain is Glutamate 5-kinase (376 aa).

K18 contributes to the ATP binding site. Residues S58, D145, and N157 each contribute to the substrate site. ATP-binding positions include 177 to 178 (SD) and 218 to 224 (TGGMASK). In terms of domain architecture, PUA spans 280–358 (TGALTLDAGA…SELPGELRRP (79 aa)).

Belongs to the glutamate 5-kinase family.

The protein localises to the cytoplasm. It catalyses the reaction L-glutamate + ATP = L-glutamyl 5-phosphate + ADP. The protein operates within amino-acid biosynthesis; L-proline biosynthesis; L-glutamate 5-semialdehyde from L-glutamate: step 1/2. Its function is as follows. Catalyzes the transfer of a phosphate group to glutamate to form L-glutamate 5-phosphate. The chain is Glutamate 5-kinase from Mycobacterium tuberculosis (strain ATCC 25177 / H37Ra).